A 452-amino-acid polypeptide reads, in one-letter code: tRNA modification GTPase MnmE (452 aa).

Positions 22, 79, and 119 each coordinate (6S)-5-formyl-5,6,7,8-tetrahydrofolate. One can recognise a TrmE-type G domain in the interval 215–375; that stretch reads GMKVVIAGRP…LRQHLKQSMG (161 aa). A K(+)-binding site is contributed by asparagine 225. Residues 225–230, 244–250, 269–272, and 333–336 contribute to the GTP site; these read NAGKSS, TDIAGTT, DTAG, and NKAD. Residue serine 229 participates in Mg(2+) binding. Residues threonine 244, isoleucine 246, and threonine 249 each coordinate K(+). Threonine 250 contributes to the Mg(2+) binding site. Position 452 (lysine 452) interacts with (6S)-5-formyl-5,6,7,8-tetrahydrofolate.

This sequence belongs to the TRAFAC class TrmE-Era-EngA-EngB-Septin-like GTPase superfamily. TrmE GTPase family. As to quaternary structure, homodimer. Heterotetramer of two MnmE and two MnmG subunits. K(+) serves as cofactor.

Its subcellular location is the cytoplasm. Its function is as follows. Exhibits a very high intrinsic GTPase hydrolysis rate. Involved in the addition of a carboxymethylaminomethyl (cmnm) group at the wobble position (U34) of certain tRNAs, forming tRNA-cmnm(5)s(2)U34. This is tRNA modification GTPase MnmE from Histophilus somni (strain 129Pt) (Haemophilus somnus).